The following is a 173-amino-acid chain: Acetyl-CoA decarbonylase/synthase complex subunit epsilon (173 aa).

Belongs to the CdhB family. As to quaternary structure, heterotetramer of two alpha and two epsilon subunits. The ACDS complex is made up of alpha, epsilon, beta, gamma and delta subunits with a probable stoichiometry of (alpha(2)epsilon(2))(4)-beta(8)-(gamma(1)delta(1))(8).

Its pathway is one-carbon metabolism; methanogenesis from acetate. Functionally, part of a complex that catalyzes the reversible cleavage of acetyl-CoA, allowing growth on acetate as sole source of carbon and energy. The alpha-epsilon subcomponent functions as a carbon monoxide dehydrogenase. The precise role of the epsilon subunit is unclear; it may have a stabilizing role within the alpha(2)epsilon(2) component and/or be involved in electron transfer to FAD during a potential FAD-mediated CO oxidation. The polypeptide is Acetyl-CoA decarbonylase/synthase complex subunit epsilon (Methanothermobacter thermautotrophicus (strain ATCC 29096 / DSM 1053 / JCM 10044 / NBRC 100330 / Delta H) (Methanobacterium thermoautotrophicum)).